The chain runs to 151 residues: Probable transport accessory protein MmpS1 (151 aa).

A run of 2 helical transmembrane segments spans residues 8 to 28 (FWIP…VSRL) and 81 to 101 (VVNA…AVVA).

This sequence belongs to the MmpS family.

The protein localises to the cell membrane. The chain is Probable transport accessory protein MmpS1 (mmpS1) from Mycobacterium tuberculosis (strain CDC 1551 / Oshkosh).